Here is a 561-residue protein sequence, read N- to C-terminus: uncharacterized protein (561 aa).

6 helical membrane-spanning segments follow: residues 10 to 29 (LLRNNPEIALFLAIAIGYWI), 34 to 56 (FGSLQIGGVAGSLLAAVLISQIG), 63 to 80 (LKTVLFALFIYAVGFQSG), 95 to 117 (VLMAFVLAISGLFTVLAVARMFH), 122 to 144 (LAAGVAAGGLTQSAIIGTASSAL), and 164 to 186 (GYAVTYIFGSLAPIIICVNILPW). RCK C-terminal domains lie at 205-287 (QGMA…LLGE) and 294-376 (HDMD…ELGS). 5 helical membrane passes run 386–403 (LVFHGVGLVVGLLIGLIV), 407–429 (GSIPLTLGSGGGALLSGLLFGWY), 442–464 (AASTLLVDFGLSGFVAVTGLQTG), 479–501 (FMLGVVVSIVPLIITMLFGRYVL), and 538–560 (SFAITYAIANVLLTLLGPLVVAF).

This sequence belongs to the AAE transporter (TC 2.A.81) family.

The protein resides in the cell membrane. This is an uncharacterized protein from Zymomonas mobilis subsp. mobilis (strain ATCC 31821 / ZM4 / CP4).